A 475-amino-acid chain; its full sequence is Bifunctional protein HldE (475 aa).

The segment at Met1–Thr318 is ribokinase. Asn195–Glu198 is a binding site for ATP. The active site involves Asp264. Positions Met344–Lys475 are cytidylyltransferase.

The protein in the N-terminal section; belongs to the carbohydrate kinase PfkB family. In the C-terminal section; belongs to the cytidylyltransferase family. In terms of assembly, homodimer.

It catalyses the reaction D-glycero-beta-D-manno-heptose 7-phosphate + ATP = D-glycero-beta-D-manno-heptose 1,7-bisphosphate + ADP + H(+). The enzyme catalyses D-glycero-beta-D-manno-heptose 1-phosphate + ATP + H(+) = ADP-D-glycero-beta-D-manno-heptose + diphosphate. It functions in the pathway nucleotide-sugar biosynthesis; ADP-L-glycero-beta-D-manno-heptose biosynthesis; ADP-L-glycero-beta-D-manno-heptose from D-glycero-beta-D-manno-heptose 7-phosphate: step 1/4. It participates in nucleotide-sugar biosynthesis; ADP-L-glycero-beta-D-manno-heptose biosynthesis; ADP-L-glycero-beta-D-manno-heptose from D-glycero-beta-D-manno-heptose 7-phosphate: step 3/4. In terms of biological role, catalyzes the phosphorylation of D-glycero-D-manno-heptose 7-phosphate at the C-1 position to selectively form D-glycero-beta-D-manno-heptose-1,7-bisphosphate. Its function is as follows. Catalyzes the ADP transfer from ATP to D-glycero-beta-D-manno-heptose 1-phosphate, yielding ADP-D-glycero-beta-D-manno-heptose. This chain is Bifunctional protein HldE, found in Actinobacillus pleuropneumoniae serotype 5b (strain L20).